A 62-amino-acid polypeptide reads, in one-letter code: ATP synthase subunit J, mitochondrial (62 aa).

A helical membrane pass occupies residues 13–32 (IVKPLWPYAVGGVITFFLFA).

In terms of assembly, F-type ATP synthases have 2 components, the catalytic core F(1) and the membrane-embedded component F(0), linked together by a central stalk and a peripheral stalk. The central stalk, also called rotor shaft, is often seen as part of F(1). The peripheral stalk is seen as part of F(0). F(0) contains the membrane channel next to the rotor. F-type ATP synthases form dimers but each monomer functions independently in ATP generation. The dimer consists of 17 different polypeptides: ATP1 (subunit alpha, 3 molecules per monomer, part of F(1)), ATP2 (subunit beta, 3 copies per monomer, part of F(1)), ATP3 (subunit gamma, part of the central stalk), ATP4 (subunit b, part of the peripheral stalk), ATP5/OSCP (subunit 5/OSCP, part of the peripheral stalk), ATP6 (subunit a, part of the peripheral stalk), ATP7 (subunit d, part of the peripheral stalk), ATP8 (subunit 8, part of the peripheral stalk), OLI1 (subunit c, part of the rotor, 10 molecules per monomer), ATP14 (subunit h, part of the peripheral stalk), ATP15 (subunit epsilon, part of the central stalk), ATP16 (subunit delta, part of the central stalk), ATP17 (subunit f, part of the peripheral stalk), ATP18 (subunit i/j, part of the peripheral stalk), ATP19 (subunit k, dimer-specific, at interface between monomers), ATP20 (subunit g, at interface between monomers), TIM11 (subunit e, at interface between monomers).

It is found in the mitochondrion inner membrane. Mitochondrial membrane ATP synthase (F(1)F(0) ATP synthase or Complex V) produces ATP from ADP in the presence of a proton gradient across the membrane which is generated by electron transport complexes of the respiratory chain. F-type ATP synthases consist of two structural domains, F(1) - containing the extramembraneous catalytic core, and F(0) - containing the membrane proton channel, linked together by a central stalk and a peripheral stalk. During catalysis, ATP synthesis in the catalytic domain of F(1) is coupled via a rotary mechanism of the central stalk subunits to proton translocation. Part of the complex F(0) domain. Minor subunit located with subunit a/ATP6 in the membrane. In Yarrowia lipolytica (strain CLIB 122 / E 150) (Yeast), this protein is ATP synthase subunit J, mitochondrial.